The following is a 453-amino-acid chain: MSPQTETKAGVGFKAGVKEYKLTYYTPEYETKDTDILAAFRVTPQPGVPPEERGAAVAAESSTGTWTTVWTDGLTSLDRYKGRCYHIEPVPGEEEQFIAYVAYPLDLFEEGSVTNMFTSIVGNVFGFKALRALRLEDLRIPVAYVKTFQGPPHGIQVERDKLNKYGRPLLGCTIKPKLGLSAKNYGRAVYECLRGGLDFTKDDENVNSQPFMRWRDRFLFCAEAIYKSQAETGEIKGHYLNATAGTCEDMMKRAVFARELGVPIVMHDYLTGGFTANTTLAHYCRDNGLLLHIHRAMHAVIDRQKNHGMHFRVLAKALRMSGGDHIHAGTVVGKLEGERDITLGFVDLLRDDYIEKDRSRGIYFTQDWVSLPGVLPVASRGIHVWHMPALTEIFGDDSVLQFGGGTLGHPWGNAPGAVANRVALEACVKARNEGRDLAVDGGDIIREACKWSP.

A propeptide spanning residues 1–2 (MS) is cleaved from the precursor. Residue P3 is modified to N-acetylproline. K14 bears the N6,N6,N6-trimethyllysine mark. Residues N123 and T173 each contribute to the substrate site. K175 acts as the Proton acceptor in catalysis. K177 contributes to the substrate binding site. K201, D203, and E204 together coordinate Mg(2+). K201 is modified (N6-carboxylysine). H294 acts as the Proton acceptor in catalysis. Substrate contacts are provided by R295, H327, and S379.

This sequence belongs to the RuBisCO large chain family. Type I subfamily. As to quaternary structure, heterohexadecamer of 8 large chains and 8 small chains; disulfide-linked. The disulfide link is formed within the large subunit homodimers. It depends on Mg(2+) as a cofactor. The disulfide bond which can form in the large chain dimeric partners within the hexadecamer appears to be associated with oxidative stress and protein turnover.

The protein resides in the plastid. The protein localises to the chloroplast. It catalyses the reaction 2 (2R)-3-phosphoglycerate + 2 H(+) = D-ribulose 1,5-bisphosphate + CO2 + H2O. The catalysed reaction is D-ribulose 1,5-bisphosphate + O2 = 2-phosphoglycolate + (2R)-3-phosphoglycerate + 2 H(+). RuBisCO catalyzes two reactions: the carboxylation of D-ribulose 1,5-bisphosphate, the primary event in carbon dioxide fixation, as well as the oxidative fragmentation of the pentose substrate in the photorespiration process. Both reactions occur simultaneously and in competition at the same active site. The chain is Ribulose bisphosphate carboxylase large chain from Asperula laevigata (Smooth woodruff).